The primary structure comprises 138 residues: Small ribosomal subunit protein uS11 (138 aa).

Residues 1–12 (MPPKKANAAGPK) are compositionally biased toward low complexity. Positions 1-23 (MPPKKANAAGPKKGQKTRKREKK) are disordered. Over residues 13–22 (KGQKTRKREK) the composition is skewed to basic residues.

It belongs to the universal ribosomal protein uS11 family. Part of the 30S ribosomal subunit. Interacts with proteins S7 and S18. Binds to IF-3.

In terms of biological role, located on the platform of the 30S subunit, it bridges several disparate RNA helices of the 16S rRNA. Forms part of the Shine-Dalgarno cleft in the 70S ribosome. The protein is Small ribosomal subunit protein uS11 of Mycobacterium leprae (strain Br4923).